Here is a 180-residue protein sequence, read N- to C-terminus: UPF0134 protein MPN_368 (180 aa).

This sequence belongs to the UPF0134 family.

This chain is UPF0134 protein MPN_368, found in Mycoplasma pneumoniae (strain ATCC 29342 / M129 / Subtype 1) (Mycoplasmoides pneumoniae).